A 643-amino-acid polypeptide reads, in one-letter code: 3D-(3,5/4)-trihydroxycyclohexane-1,2-dione hydrolase (643 aa).

Glutamate 65 contributes to the thiamine diphosphate binding site. A thiamine pyrophosphate binding region spans residues 441 to 521; that stretch reads SLPGDLQRMW…VNVLLFDNCG (81 aa). Mg(2+) contacts are provided by aspartate 492 and asparagine 519.

The protein belongs to the TPP enzyme family. The cofactor is Mg(2+). Thiamine diphosphate is required as a cofactor.

The catalysed reaction is 3D-3,5/4-trihydroxycyclohexane-1,2-dione + H2O = 5-deoxy-D-glucuronate + H(+). It functions in the pathway polyol metabolism; myo-inositol degradation into acetyl-CoA; acetyl-CoA from myo-inositol: step 3/7. In terms of biological role, involved in the cleavage of the C1-C2 bond of 3D-(3,5/4)-trihydroxycyclohexane-1,2-dione (THcHDO) to yield 5-deoxy-glucuronate (5DG). The protein is 3D-(3,5/4)-trihydroxycyclohexane-1,2-dione hydrolase of Clostridium botulinum (strain Eklund 17B / Type B).